Reading from the N-terminus, the 1179-residue chain is ATP-dependent helicase/deoxyribonuclease subunit B (1179 aa).

This sequence belongs to the helicase family. AddB/RexB type 2 subfamily. As to quaternary structure, heterodimer of AddA and RexB. Mg(2+) serves as cofactor.

Functionally, the heterodimer acts as both an ATP-dependent DNA helicase and an ATP-dependent, dual-direction single-stranded exonuclease. Recognizes the chi site generating a DNA molecule suitable for the initiation of homologous recombination. This subunit has 5' -&gt; 3' nuclease activity but not helicase activity. The protein is ATP-dependent helicase/deoxyribonuclease subunit B of Lactobacillus delbrueckii subsp. bulgaricus (strain ATCC BAA-365 / Lb-18).